The chain runs to 709 residues: Frizzled-6 (709 aa).

A signal peptide spans 1 to 18 (MERSPFLLACILLPLVRG). An FZ domain is found at 19–132 (HSLFTCEPIT…CNRLPHCDDT (114 aa)). At 19-201 (HSLFTCEPIT…SDELDFAKSF (183 aa)) the chain is on the extracellular side. 5 disulfide bridges follow: C24/C85, C32/C78, C69/C106, C95/C129, and C99/C123. Residue N38 is glycosylated (N-linked (GlcNAc...) asparagine). A helical transmembrane segment spans residues 202-222 (IGIVSIFCLCATLFTFLTFLI). Residues 223-233 (DVRRFRYPERP) lie on the Cytoplasmic side of the membrane. Residues 234–254 (IIYYSVCYSIVSLMYFVGFLL) traverse the membrane as a helical segment. Residues 255–284 (GNSTACNKADEKLELGDTVVLGSKNKACSV) are Extracellular-facing. An N-linked (GlcNAc...) asparagine glycan is attached at N256. The helical transmembrane segment at 285 to 305 (VFMFLYFFTMAGTVWWVILTI) threads the bilayer. The Cytoplasmic portion of the chain corresponds to 306–324 (TWFLAAGRKWSCEAIEQKA). Residues 325-345 (VWFHAVAWGAPGFLTVMLLAM) traverse the membrane as a helical segment. Residues 346 to 370 (NKVEGDNISGVCFVGLYDLDASRYF) lie on the Extracellular side of the membrane. N352 carries N-linked (GlcNAc...) asparagine glycosylation. Residues 371-391 (VLLPLCLCVFVGLSLLLAGII) traverse the membrane as a helical segment. The Cytoplasmic portion of the chain corresponds to 392-416 (SLNHVRQVIQHDGRNQEKLKKFMIR). Residues 417-437 (IGVFSGLYLVPLVTLLGCYVY) form a helical membrane-spanning segment. Topologically, residues 438 to 473 (ELVNRITWEMTWFSDHCHQYRIPCPYQANPKARPEL) are extracellular. A helical transmembrane segment spans residues 474-494 (ALFMIKYLMTLIVGISAVFWV). The Cytoplasmic portion of the chain corresponds to 495–709 (GSKKTCTEWA…EQGAGSHSDA (215 aa)). The Lys-Thr-X-X-X-Trp motif, mediates interaction with the PDZ domain of Dvl family members motif lies at 498–503 (KTCTEW). Residues 583-594 (QETSTEVHTSPE) show a composition bias toward polar residues. The segment at 583–709 (QETSTEVHTS…EQGAGSHSDA (127 aa)) is disordered. The span at 596–616 (SVKEGRADRANTPSAKDRDCG) shows a compositional bias: basic and acidic residues. Polar residues predominate over residues 620-629 (GPSSKLSGNR). The segment covering 630–644 (NGRESRAGGLKERSN) has biased composition (basic and acidic residues). A Phosphoserine modification is found at S656. Residues 669–690 (CSTSQAASSPEPTSLKGSTSLP) are compositionally biased toward polar residues. Residues 697–709 (ARKEQGAGSHSDA) show a composition bias toward basic and acidic residues.

It belongs to the G-protein coupled receptor Fz/Smo family. In terms of assembly, interacts with LMBR1L. Post-translationally, ubiquitinated by ZNRF3, leading to its degradation by the proteasome. In terms of tissue distribution, expressed in both hair cells and supporting cells in the utricle, saccule, cristae and the organ of Corti in the inner ear (at protein level).

It localises to the membrane. It is found in the cell membrane. The protein resides in the cell surface. Its subcellular location is the apical cell membrane. The protein localises to the cytoplasmic vesicle membrane. It localises to the endoplasmic reticulum membrane. In terms of biological role, receptor for Wnt proteins. Most of frizzled receptors are coupled to the beta-catenin canonical signaling pathway, which leads to the activation of disheveled proteins, inhibition of GSK-3 kinase, nuclear accumulation of beta-catenin and activation of Wnt target genes. A second signaling pathway involving PKC and calcium fluxes has been seen for some family members, but it is not yet clear if it represents a distinct pathway or if it can be integrated in the canonical pathway, as PKC seems to be required for Wnt-mediated inactivation of GSK-3 kinase. Both pathways seem to involve interactions with G-proteins. Activation by Wnt5A stimulates PKC activity via a G-protein-dependent mechanism. Involved in transduction and intercellular transmission of polarity information during tissue morphogenesis and/or in differentiated tissues. Together with FZD3, is involved in the neural tube closure and plays a role in the regulation of the establishment of planar cell polarity (PCP), particularly in the orientation of asymmetric bundles of stereocilia on the apical faces of a subset of auditory and vestibular sensory cells located in the inner ear. The protein is Frizzled-6 (Fzd6) of Mus musculus (Mouse).